A 324-amino-acid polypeptide reads, in one-letter code: Putative arsenical pump-driving ATPase (324 aa).

Residue 21–28 participates in ATP binding; that stretch reads GKGGVGKT.

The protein belongs to the arsA ATPase family.

The catalysed reaction is arsenite(in) + ATP + H2O = arsenite(out) + ADP + phosphate + H(+). Functionally, anion-transporting ATPase. Catalyzes the extrusion of arsenite. This Methanothermobacter thermautotrophicus (strain ATCC 29096 / DSM 1053 / JCM 10044 / NBRC 100330 / Delta H) (Methanobacterium thermoautotrophicum) protein is Putative arsenical pump-driving ATPase.